The following is a 727-amino-acid chain: Glucans biosynthesis glucosyltransferase H (727 aa).

The disordered stretch occupies residues 18–45 (SAMPNERPGAMEPQSLTEMPEGFPRRST). Helical transmembrane passes span 58 to 78 (FFVV…MGAV), 90 to 110 (LVLL…CSGI), 278 to 298 (LQQF…GWWV), 408 to 428 (IMAY…LMLA), 460 to 480 (LFYI…LLLL), 496 to 516 (IFSV…MMFI), and 572 to 592 (LLAW…ISAW).

This sequence belongs to the glycosyltransferase 2 family. OpgH subfamily.

The protein resides in the cell inner membrane. The protein operates within glycan metabolism; osmoregulated periplasmic glucan (OPG) biosynthesis. Involved in the biosynthesis of osmoregulated periplasmic glucans (OPGs). The sequence is that of Glucans biosynthesis glucosyltransferase H from Shewanella putrefaciens (strain CN-32 / ATCC BAA-453).